Consider the following 242-residue polypeptide: ATP-dependent dethiobiotin synthetase BioD (242 aa).

12–17 (SVGKTI) is an ATP binding site. Thr16 contacts Mg(2+). Residue Lys37 is part of the active site. Asp66 contacts ATP. Mg(2+) contacts are provided by Asp66 and Glu124. Residue 184–185 (NR) participates in ATP binding.

This sequence belongs to the dethiobiotin synthetase family. As to quaternary structure, homodimer. Mg(2+) is required as a cofactor.

It is found in the cytoplasm. It carries out the reaction (7R,8S)-7,8-diammoniononanoate + CO2 + ATP = (4R,5S)-dethiobiotin + ADP + phosphate + 3 H(+). Its pathway is cofactor biosynthesis; biotin biosynthesis; biotin from 7,8-diaminononanoate: step 1/2. Its function is as follows. Catalyzes a mechanistically unusual reaction, the ATP-dependent insertion of CO2 between the N7 and N8 nitrogen atoms of 7,8-diaminopelargonic acid (DAPA, also called 7,8-diammoniononanoate) to form a ureido ring. In Mannheimia succiniciproducens (strain KCTC 0769BP / MBEL55E), this protein is ATP-dependent dethiobiotin synthetase BioD.